Here is a 231-residue protein sequence, read N- to C-terminus: CLAVATA3/ESR (CLE)-related protein 4B-2 (231 aa).

A signal peptide spans 1–21 (MATNTMLCLLILSVVLALAFA). The segment at 21 to 83 (ATNKKGDEEP…SNQLPNNNWM (63 aa)) is required for secretion from the host cytoplasm to the host apoplasm. Asparagine 32 carries N-linked (GlcNAc...) asparagine glycosylation. The tract at residues 116–231 (RKTGMHSQRH…APAGPDPIHH (116 aa)) is disordered. 2 stretches are compositionally biased toward basic and acidic residues: residues 125 to 137 (HHEE…EKRV) and 144 to 221 (PIHH…EKRG). An A-1 repeat occupies 127 to 135 (EETTLEQEK). The 5 X approximate repeat A stretch occupies residues 127 to 219 (EETTLEQEKR…HEETTFEQEK (93 aa)). The stretch at 136–147 (RVAGAGPDPIHH) is one CLE-1 repeat. The interval 136-231 (RVAGAGPDPI…APAGPDPIHH (96 aa)) is 5 X approximate repeat CLE. Residues 148 to 156 (EETTLEQEK) form an A-2 repeat. The stretch at 157–168 (RAVPAGPDPKHH) is one CLE-2 repeat. Residues 169–177 (EETTLEQEK) form an A-3 repeat. A CLE-3 repeat occupies 178–189 (RAVPAGPDPKHH). One copy of the A-4 repeat lies at 190 to 198 (EETTLEQEK). A CLE-4 repeat occupies 199-210 (RAVPAGPDPKHH). One copy of the A-5 repeat lies at 211–219 (EETTFEQEK). One copy of the CLE-5 repeat lies at 220 to 231 (RGAPAGPDPIHH).

Belongs to the CLV3/ESR signal peptide family. In terms of tissue distribution, highly expressed exclusively within the dorsal esophageal gland cell during syncytium formation in host plants.

The protein localises to the secreted. Its subcellular location is the host cytoplasm. It localises to the host extracellular space. The protein resides in the extracellular space. It is found in the apoplast. Mimics host plant CLE extracellular signal peptides that regulate cell fate. May play a role in the differentiation or division of feeding cells (syncytia) induced in plant roots during infection. The chain is CLAVATA3/ESR (CLE)-related protein 4B-2 (CLE-4B-2) from Globodera rostochiensis (Golden nematode worm).